Reading from the N-terminus, the 506-residue chain is Plant intracellular Ras-group-related LRR protein 1 (506 aa).

Residues 24–48 (TAKSSSSSDVEPPPSKSDPSSSSNH) form a disordered region. The stretch at 143–193 (KSILKLNELHESYEKLLKEAEERLVRIYESAEKNAAAVAEEEAAEVEVNEE) forms a coiled coil. LRR repeat units follow at residues 203–225 (ENPLDRVDLSGRKLKLLPEAFGK), 226–249 (IQGLLVLNLYNNQLQAIPDSIAGL), 251–272 (NLLELDVSTNFLETLPDSIGLL), 273–295 (SKLKILNVSCNKLTTLPDSICHC), 297–319 (SLVVLDASYNNLTYLPTNIGFEL), 320–342 (VKLEKLLIHLNKIRSLPTSIGEM), 344–364 (SLRYLDAHFNELNGLPNSFGL), 365–389 (LTNLEYLNLSSNFSDLQDLPASFGD), 390–412 (LISLQELDLSNNQIHSLPDAFGT), and 414–436 (VNLTKLNLDQNPLVVPPDEVVKQ). The GVYW signature appears at 437–449 (GVDAVKMYMGKRW).

This sequence belongs to the SHOC2 family. Widely expressed.

Leucine-rich repeat protein that likely mediates protein interactions, possibly in the context of signal transduction. PIRL1 acts redundantly with PIRL9 in the differentiation of microspores into pollen. The protein is Plant intracellular Ras-group-related LRR protein 1 (PIRL1) of Arabidopsis thaliana (Mouse-ear cress).